The chain runs to 68 residues: DNA-directed RNA polymerase subunit omega (68 aa).

The protein belongs to the RNA polymerase subunit omega family. In terms of assembly, the RNAP catalytic core consists of 2 alpha, 1 beta, 1 beta' and 1 omega subunit. When a sigma factor is associated with the core the holoenzyme is formed, which can initiate transcription.

The catalysed reaction is RNA(n) + a ribonucleoside 5'-triphosphate = RNA(n+1) + diphosphate. Promotes RNA polymerase assembly. Latches the N- and C-terminal regions of the beta' subunit thereby facilitating its interaction with the beta and alpha subunits. The protein is DNA-directed RNA polymerase subunit omega of Syntrophotalea carbinolica (strain DSM 2380 / NBRC 103641 / GraBd1) (Pelobacter carbinolicus).